Here is a 350-residue protein sequence, read N- to C-terminus: Phosphoribosylformylglycinamidine cyclo-ligase (350 aa).

Belongs to the AIR synthase family.

It localises to the cytoplasm. The enzyme catalyses 2-formamido-N(1)-(5-O-phospho-beta-D-ribosyl)acetamidine + ATP = 5-amino-1-(5-phospho-beta-D-ribosyl)imidazole + ADP + phosphate + H(+). The protein operates within purine metabolism; IMP biosynthesis via de novo pathway; 5-amino-1-(5-phospho-D-ribosyl)imidazole from N(2)-formyl-N(1)-(5-phospho-D-ribosyl)glycinamide: step 2/2. The sequence is that of Phosphoribosylformylglycinamidine cyclo-ligase from Nitratidesulfovibrio vulgaris (strain DSM 19637 / Miyazaki F) (Desulfovibrio vulgaris).